A 176-amino-acid polypeptide reads, in one-letter code: MTTIVSVRRNGQVVIGGDGQATMGNTVMKGNVRKVRRLYNDKVIAGFAGGTADAFTLFELFERKLEMHQGHLTKAAVELAKDWRTDRMLRKLEALLAVADENTSLIITGNGDVIQPENDLIAIGSGGPFAQSAARAMLENTDLGARQIAEKALTIAGDICIYTNHNHNFEELPSKA.

Thr2 is a catalytic residue. Residues Gly157, Cys160, and Thr163 each coordinate Na(+).

Belongs to the peptidase T1B family. HslV subfamily. A double ring-shaped homohexamer of HslV is capped on each side by a ring-shaped HslU homohexamer. The assembly of the HslU/HslV complex is dependent on binding of ATP.

Its subcellular location is the cytoplasm. The enzyme catalyses ATP-dependent cleavage of peptide bonds with broad specificity.. With respect to regulation, allosterically activated by HslU binding. Its function is as follows. Protease subunit of a proteasome-like degradation complex believed to be a general protein degrading machinery. This is ATP-dependent protease subunit HslV from Photorhabdus laumondii subsp. laumondii (strain DSM 15139 / CIP 105565 / TT01) (Photorhabdus luminescens subsp. laumondii).